Reading from the N-terminus, the 211-residue chain is Phosphatidylglycerophosphatase C (211 aa).

Residues 1 to 33 (MATHERRVVFFDLDGTLHQQDMFGSFLRYLLRR) lie on the Cytoplasmic side of the membrane. A helical transmembrane segment spans residues 34–54 (QPLNALLVLPLLPIIAIALLI). The Periplasmic portion of the chain corresponds to 55–211 (KGRAARWPMS…TPRGELQQLE (157 aa)).

The cofactor is Mg(2+).

Its subcellular location is the cell inner membrane. It catalyses the reaction a 1,2-diacyl-sn-glycero-3-phospho-(1'-sn-glycero-3'-phosphate) + H2O = a 1,2-diacyl-sn-glycero-3-phospho-(1'-sn-glycerol) + phosphate. It functions in the pathway phospholipid metabolism; phosphatidylglycerol biosynthesis; phosphatidylglycerol from CDP-diacylglycerol: step 2/2. Its function is as follows. Lipid phosphatase which dephosphorylates phosphatidylglycerophosphate (PGP) to phosphatidylglycerol (PG). This chain is Phosphatidylglycerophosphatase C (pgpC), found in Escherichia coli (strain K12).